A 197-amino-acid chain; its full sequence is Negative modulator of initiation of replication (197 aa).

Belongs to the SeqA family. Homodimer. Polymerizes to form helical filaments.

It is found in the cytoplasm. Its function is as follows. Negative regulator of replication initiation, which contributes to regulation of DNA replication and ensures that replication initiation occurs exactly once per chromosome per cell cycle. Binds to pairs of hemimethylated GATC sequences in the oriC region, thus preventing assembly of replication proteins and re-initiation at newly replicated origins. Repression is relieved when the region becomes fully methylated. The protein is Negative modulator of initiation of replication of Pseudoalteromonas translucida (strain TAC 125).